The primary structure comprises 345 residues: Carbamoyl phosphate synthase small chain (345 aa).

Residues 1–169 form a CPSase region; it reads MKKYLVMEDG…FVKGEEGGTV (169 aa). Residues S45, G213, and G215 each contribute to the L-glutamine site. Positions 168–345 constitute a Glutamine amidotransferase type-1 domain; that stretch reads TVLFIDLGSK…GEMKRRIGYA (178 aa). C242 serves as the catalytic Nucleophile. 5 residues coordinate L-glutamine: F243, Q246, N282, G284, and Y285. Catalysis depends on residues H321 and E323.

It belongs to the CarA family. As to quaternary structure, composed of two chains; the small (or glutamine) chain promotes the hydrolysis of glutamine to ammonia, which is used by the large (or ammonia) chain to synthesize carbamoyl phosphate. Tetramer of heterodimers (alpha,beta)4.

It carries out the reaction hydrogencarbonate + L-glutamine + 2 ATP + H2O = carbamoyl phosphate + L-glutamate + 2 ADP + phosphate + 2 H(+). It catalyses the reaction L-glutamine + H2O = L-glutamate + NH4(+). Its pathway is amino-acid biosynthesis; L-arginine biosynthesis; carbamoyl phosphate from bicarbonate: step 1/1. The protein operates within pyrimidine metabolism; UMP biosynthesis via de novo pathway; (S)-dihydroorotate from bicarbonate: step 1/3. Its function is as follows. Small subunit of the glutamine-dependent carbamoyl phosphate synthetase (CPSase). CPSase catalyzes the formation of carbamoyl phosphate from the ammonia moiety of glutamine, carbonate, and phosphate donated by ATP, constituting the first step of 2 biosynthetic pathways, one leading to arginine and/or urea and the other to pyrimidine nucleotides. The small subunit (glutamine amidotransferase) binds and cleaves glutamine to supply the large subunit with the substrate ammonia. This Thermoplasma volcanium (strain ATCC 51530 / DSM 4299 / JCM 9571 / NBRC 15438 / GSS1) protein is Carbamoyl phosphate synthase small chain.